Here is a 501-residue protein sequence, read N- to C-terminus: 2,3-bisphosphoglycerate-independent phosphoglycerate mutase (501 aa).

Positions 10 and 60 each coordinate Mn(2+). The Phosphoserine intermediate role is filled by S60. Residues H121, 151-152 (RD), R182, R188, 256-259 (RPDR), and K329 contribute to the substrate site. Positions 394, 398, 435, 436, and 453 each coordinate Mn(2+).

It belongs to the BPG-independent phosphoglycerate mutase family. In terms of assembly, monomer. It depends on Mn(2+) as a cofactor.

The enzyme catalyses (2R)-2-phosphoglycerate = (2R)-3-phosphoglycerate. It functions in the pathway carbohydrate degradation; glycolysis; pyruvate from D-glyceraldehyde 3-phosphate: step 3/5. Functionally, catalyzes the interconversion of 2-phosphoglycerate and 3-phosphoglycerate. The sequence is that of 2,3-bisphosphoglycerate-independent phosphoglycerate mutase from Mycoplasmopsis synoviae (strain 53) (Mycoplasma synoviae).